Reading from the N-terminus, the 427-residue chain is Male abnormal protein mab-31 (427 aa).

Residues 68–102 (PIGTGRFPNPSPPRSSSGTNTPIRKTPGSRPDRGK) are disordered.

The protein localises to the nucleus. In terms of biological role, putative transcription factor. Acts in a TGF-beta-like pathway during development of male-specific genital sensilla (simple sense organs), known as rays. Involved in production of reactive oxygen species (ROS), acting downstream of the TGF-beta-like dbl-1 signaling pathway. Involved in locomotory behavior. The sequence is that of Male abnormal protein mab-31 from Caenorhabditis elegans.